A 190-amino-acid chain; its full sequence is Holliday junction branch migration complex subunit RuvA (190 aa).

Residues 1-64 (MIGKLTGTLL…EDAQLLYGFG (64 aa)) are domain I. The segment at 65–143 (THSERQAFRE…ADTGAQSLFV (79 aa)) is domain II. Residues 144–148 (NNDQN) are flexible linker. Residues 148–190 (NDIVQALMALGYSDKDAAAALKKLPPDVGVTEGIKLALKALAK) form a domain III region.

It belongs to the RuvA family. Homotetramer. Forms an RuvA(8)-RuvB(12)-Holliday junction (HJ) complex. HJ DNA is sandwiched between 2 RuvA tetramers; dsDNA enters through RuvA and exits via RuvB. An RuvB hexamer assembles on each DNA strand where it exits the tetramer. Each RuvB hexamer is contacted by two RuvA subunits (via domain III) on 2 adjacent RuvB subunits; this complex drives branch migration. In the full resolvosome a probable DNA-RuvA(4)-RuvB(12)-RuvC(2) complex forms which resolves the HJ.

Its subcellular location is the cytoplasm. The RuvA-RuvB-RuvC complex processes Holliday junction (HJ) DNA during genetic recombination and DNA repair, while the RuvA-RuvB complex plays an important role in the rescue of blocked DNA replication forks via replication fork reversal (RFR). RuvA specifically binds to HJ cruciform DNA, conferring on it an open structure. The RuvB hexamer acts as an ATP-dependent pump, pulling dsDNA into and through the RuvAB complex. HJ branch migration allows RuvC to scan DNA until it finds its consensus sequence, where it cleaves and resolves the cruciform DNA. The protein is Holliday junction branch migration complex subunit RuvA of Delftia acidovorans (strain DSM 14801 / SPH-1).